The following is a 160-amino-acid chain: Nucleotide-binding protein CbuK_1936 (160 aa).

Belongs to the YajQ family.

Functionally, nucleotide-binding protein. The polypeptide is Nucleotide-binding protein CbuK_1936 (Coxiella burnetii (strain CbuK_Q154) (Coxiella burnetii (strain Q154))).